A 328-amino-acid polypeptide reads, in one-letter code: Putative glycosyltransferase 41 (328 aa).

It belongs to the glycosyltransferase group 1 family. Glycosyltransferase 4 subfamily.

This chain is Putative glycosyltransferase 41 (SIFV0041), found in Sulfolobus islandicus filamentous virus (isolate Iceland/Hveragerdi) (SIFV).